The following is a 205-amino-acid chain: dITP/XTP pyrophosphatase (205 aa).

Residue threonine 16 to lysine 21 coordinates substrate. Mg(2+) is bound by residues glutamate 48 and aspartate 77. Aspartate 77 (proton acceptor) is an active-site residue. Substrate-binding positions include serine 78, phenylalanine 162 to aspartate 165, lysine 185, and histidine 190 to arginine 191.

Belongs to the HAM1 NTPase family. Homodimer. Mg(2+) is required as a cofactor.

It catalyses the reaction XTP + H2O = XMP + diphosphate + H(+). The enzyme catalyses dITP + H2O = dIMP + diphosphate + H(+). The catalysed reaction is ITP + H2O = IMP + diphosphate + H(+). Its function is as follows. Pyrophosphatase that catalyzes the hydrolysis of nucleoside triphosphates to their monophosphate derivatives, with a high preference for the non-canonical purine nucleotides XTP (xanthosine triphosphate), dITP (deoxyinosine triphosphate) and ITP. Seems to function as a house-cleaning enzyme that removes non-canonical purine nucleotides from the nucleotide pool, thus preventing their incorporation into DNA/RNA and avoiding chromosomal lesions. This chain is dITP/XTP pyrophosphatase, found in Erwinia tasmaniensis (strain DSM 17950 / CFBP 7177 / CIP 109463 / NCPPB 4357 / Et1/99).